A 494-amino-acid chain; its full sequence is DnaJ homolog subfamily C member 7 (494 aa).

Alanine 2 is subject to N-acetylalanine. 9 TPR repeats span residues alanine 28 to asparagine 61, alanine 62 to phenylalanine 95, valine 96 to asparagine 129, valine 142 to cysteine 175, arginine 177 to asparagine 209, alanine 210 to histidine 243, leucine 256 to asparagine 289, alanine 294 to tyrosine 327, and isoleucine 328 to lysine 361. The J domain occupies aspartate 381 to glutamine 451. Residue serine 393 is modified to Phosphoserine.

Associates with complexes containing chaperones HSP70 and HSP90. Interacts with the GAP domain of NF1. Interacts with HSP90AA1. Interacts with HSPA1A/B; the interaction is enhanced by ATP. Interacts with HSP90AB1. Interacts with PGR. Interacts with RAD9A; the interaction is interrupted by UV and heat shock treatments. Interacts with HUS1 and RAD1. Interacts with NR1I3. The DNAJC7-NR1I3 complex may also include HSP90. Interacts with HSPA8.

It localises to the cytoplasm. The protein localises to the nucleus. Its subcellular location is the cytoskeleton. In terms of biological role, acts as a co-chaperone regulating the molecular chaperones HSP70 and HSP90 in folding of steroid receptors, such as the glucocorticoid receptor and the progesterone receptor. Proposed to act as a recycling chaperone by facilitating the return of chaperone substrates to early stages of chaperoning if further folding is required. In vitro, induces ATP-independent dissociation of HSP90 but not of HSP70 from the chaperone-substrate complexes. Recruits NR1I3 to the cytoplasm. The polypeptide is DnaJ homolog subfamily C member 7 (DNAJC7) (Homo sapiens (Human)).